The sequence spans 215 residues: Large ribosomal subunit protein uL1 (215 aa).

Belongs to the universal ribosomal protein uL1 family. As to quaternary structure, part of the 50S ribosomal subunit.

Functionally, binds directly to 23S rRNA. Probably involved in E site tRNA release. In terms of biological role, protein L1 is also a translational repressor protein, it controls the translation of its operon by binding to its mRNA. This is Large ribosomal subunit protein uL1 from Cenarchaeum symbiosum (strain A).